Reading from the N-terminus, the 291-residue chain is Formamidopyrimidine-DNA glycosylase (291 aa).

The active-site Schiff-base intermediate with DNA is Pro2. Glu3 serves as the catalytic Proton donor. Lys58 serves as the catalytic Proton donor; for beta-elimination activity. The DNA site is built by His104, Arg123, and Lys166. The FPG-type zinc-finger motif lies at 257 to 291; that stretch reads KVYDREGEPCPTCGGTVQRFVQNGRSTFWCPKCQK. The Proton donor; for delta-elimination activity role is filled by Arg281.

The protein belongs to the FPG family. As to quaternary structure, monomer. Zn(2+) is required as a cofactor.

The catalysed reaction is Hydrolysis of DNA containing ring-opened 7-methylguanine residues, releasing 2,6-diamino-4-hydroxy-5-(N-methyl)formamidopyrimidine.. The enzyme catalyses 2'-deoxyribonucleotide-(2'-deoxyribose 5'-phosphate)-2'-deoxyribonucleotide-DNA = a 3'-end 2'-deoxyribonucleotide-(2,3-dehydro-2,3-deoxyribose 5'-phosphate)-DNA + a 5'-end 5'-phospho-2'-deoxyribonucleoside-DNA + H(+). Its function is as follows. Involved in base excision repair of DNA damaged by oxidation or by mutagenic agents. Acts as a DNA glycosylase that recognizes and removes damaged bases. Has a preference for oxidized purines, such as 7,8-dihydro-8-oxoguanine (8-oxoG). Has AP (apurinic/apyrimidinic) lyase activity and introduces nicks in the DNA strand. Cleaves the DNA backbone by beta-delta elimination to generate a single-strand break at the site of the removed base with both 3'- and 5'-phosphates. The polypeptide is Formamidopyrimidine-DNA glycosylase (Rhodopseudomonas palustris (strain ATCC BAA-98 / CGA009)).